The primary structure comprises 358 residues: Ion-translocating oxidoreductase complex subunit D (358 aa).

Transmembrane regions (helical) follow at residues 19 to 39, 41 to 61, 79 to 99, and 125 to 145; these read IMLW…YYFG, GVVL…FIAI, LTAL…VIII, and IGYV…MPPI. T186 bears the FMN phosphoryl threonine mark. Transmembrane regions (helical) follow at residues 220-240, 248-268, 271-291, 297-317, and 321-341; these read FAQG…FLIL, IPVA…FTGF, LSAI…FIAT, SITP…VYLI, and GNYP…VPLI.

This sequence belongs to the NqrB/RnfD family. In terms of assembly, the complex is composed of six subunits: RnfA, RnfB, RnfC, RnfD, RnfE and RnfG. Requires FMN as cofactor.

The protein resides in the cell inner membrane. Part of a membrane-bound complex that couples electron transfer with translocation of ions across the membrane. The chain is Ion-translocating oxidoreductase complex subunit D from Haemophilus influenzae (strain PittGG).